A 501-amino-acid chain; its full sequence is Acetylcholine receptor subunit beta (501 aa).

The first 23 residues, 1-23, serve as a signal peptide directing secretion; the sequence is MALGALLLLLGVLGTPLAPGARG. Residues 24-244 are Extracellular-facing; sequence SEAEGQLIKK…VIFYLIIRRK (221 aa). C151 and C165 are oxidised to a cystine. A glycan (N-linked (GlcNAc...) asparagine) is linked at N164. The next 3 membrane-spanning stretches (helical) occupy residues 245–269, 277–295, and 311–332; these read PLFY…VFYL, MGLS…LLLA, and YLMF…VLNL. The Cytoplasmic segment spans residues 333-469; that stretch reads HHRSPHTHQM…WQFVAMVVDR (137 aa). The disordered stretch occupies residues 362–382; the sequence is RPKPERDQLPEPHHSLSPRSG. Residues 363–375 are compositionally biased toward basic and acidic residues; it reads PKPERDQLPEPHH. Residue Y390 is modified to Phosphotyrosine; by Tyr-kinases. The chain crosses the membrane as a helical span at residues 470-488; sequence LFLWTFIVFTSVGTLVIFL.

Belongs to the ligand-gated ion channel (TC 1.A.9) family. Acetylcholine receptor (TC 1.A.9.1) subfamily. Beta-1/CHRNB1 sub-subfamily. In terms of assembly, pentamer of two alpha chains, and one each of the beta, delta, and gamma (in immature muscle) or epsilon (in mature muscle) chains. The muscle heteropentamer composed of alpha-1, beta-1, delta, epsilon subunits interacts with the alpha-conotoxin ImII.

The protein resides in the postsynaptic cell membrane. Its subcellular location is the cell membrane. The enzyme catalyses K(+)(in) = K(+)(out). It catalyses the reaction Na(+)(in) = Na(+)(out). Functionally, after binding acetylcholine, the AChR responds by an extensive change in conformation that affects all subunits and leads to opening of an ion-conducting channel across the plasma membrane. This is Acetylcholine receptor subunit beta (Chrnb1) from Mus musculus (Mouse).